Here is a 367-residue protein sequence, read N- to C-terminus: Histidinol-phosphate aminotransferase (367 aa).

Position 230 is an N6-(pyridoxal phosphate)lysine (Lys-230).

It belongs to the class-II pyridoxal-phosphate-dependent aminotransferase family. Histidinol-phosphate aminotransferase subfamily. As to quaternary structure, homodimer. The cofactor is pyridoxal 5'-phosphate.

The enzyme catalyses L-histidinol phosphate + 2-oxoglutarate = 3-(imidazol-4-yl)-2-oxopropyl phosphate + L-glutamate. Its pathway is amino-acid biosynthesis; L-histidine biosynthesis; L-histidine from 5-phospho-alpha-D-ribose 1-diphosphate: step 7/9. In Thermobifida fusca (strain YX), this protein is Histidinol-phosphate aminotransferase.